A 329-amino-acid chain; its full sequence is Malate dehydrogenase (329 aa).

12–18 (GAAGQIG) contacts NAD(+). Substrate-binding residues include arginine 93 and arginine 99. Residues asparagine 106, glutamine 113, and 130–132 (VGN) contribute to the NAD(+) site. Residues asparagine 132 and arginine 166 each contribute to the substrate site. Histidine 191 functions as the Proton acceptor in the catalytic mechanism.

It belongs to the LDH/MDH superfamily. MDH type 2 family.

It carries out the reaction (S)-malate + NAD(+) = oxaloacetate + NADH + H(+). Functionally, catalyzes the reversible oxidation of malate to oxaloacetate. The polypeptide is Malate dehydrogenase (Aromatoleum aromaticum (strain DSM 19018 / LMG 30748 / EbN1) (Azoarcus sp. (strain EbN1))).